The following is a 186-amino-acid chain: Small ribosomal subunit protein uS5 (186 aa).

Residues 20 to 83 (FVDKLVHINR…EAAKRDMIFV (64 aa)) form the S5 DRBM domain.

This sequence belongs to the universal ribosomal protein uS5 family. As to quaternary structure, part of the 30S ribosomal subunit. Contacts proteins S4 and S8.

With S4 and S12 plays an important role in translational accuracy. Functionally, located at the back of the 30S subunit body where it stabilizes the conformation of the head with respect to the body. This chain is Small ribosomal subunit protein uS5, found in Brucella ovis (strain ATCC 25840 / 63/290 / NCTC 10512).